Consider the following 285-residue polypeptide: NAD kinase (285 aa).

Residue Asp-64 is the Proton acceptor of the active site. Residues 64 to 65, 138 to 139, Arg-149, Arg-166, Asp-168, Leu-176, 179 to 184, and Gln-238 contribute to the NAD(+) site; these read DG, ND, and SGYTIS.

Belongs to the NAD kinase family. A divalent metal cation serves as cofactor.

Its subcellular location is the cytoplasm. The catalysed reaction is NAD(+) + ATP = ADP + NADP(+) + H(+). Its function is as follows. Involved in the regulation of the intracellular balance of NAD and NADP, and is a key enzyme in the biosynthesis of NADP. Catalyzes specifically the phosphorylation on 2'-hydroxyl of the adenosine moiety of NAD to yield NADP. This Lawsonia intracellularis (strain PHE/MN1-00) protein is NAD kinase.